Reading from the N-terminus, the 448-residue chain is Glutamyl-tRNA reductase (448 aa).

Substrate is bound by residues 49–52, serine 109, 114–116, and glutamine 120; these read TCNR and ETQ. Cysteine 50 serves as the catalytic Nucleophile. 189-194 is a binding site for NADP(+); sequence GAGETG. The interval 427–448 is disordered; that stretch reads PVDEVEETDATSAKAPLRALMR.

Belongs to the glutamyl-tRNA reductase family. In terms of assembly, homodimer.

The enzyme catalyses (S)-4-amino-5-oxopentanoate + tRNA(Glu) + NADP(+) = L-glutamyl-tRNA(Glu) + NADPH + H(+). Its pathway is porphyrin-containing compound metabolism; protoporphyrin-IX biosynthesis; 5-aminolevulinate from L-glutamyl-tRNA(Glu): step 1/2. Functionally, catalyzes the NADPH-dependent reduction of glutamyl-tRNA(Glu) to glutamate 1-semialdehyde (GSA). This Exiguobacterium sp. (strain ATCC BAA-1283 / AT1b) protein is Glutamyl-tRNA reductase.